Consider the following 305-residue polypeptide: Spermatogenesis-associated protein 4 (305 aa).

A Calponin-homology (CH) domain is found at 49 to 155; sequence SRLSRSVLRW…EEVYTLLTHR (107 aa).

It is found in the nucleus. In terms of biological role, may play a role in apoptosis regulation. This is Spermatogenesis-associated protein 4 (SPATA4) from Pan troglodytes (Chimpanzee).